We begin with the raw amino-acid sequence, 432 residues long: Malate dehydrogenase [NADP], chloroplastic (432 aa).

A chloroplast-targeting transit peptide spans 1-40; sequence MGLSTVYSPAGPRLVPAPLGRCRSAQPRRPRRAPLATVRC. Residues 18-37 form a disordered region; the sequence is PLGRCRSAQPRRPRRAPLAT. Cys-67 and Cys-72 are disulfide-bonded. 96-102 contacts NADP(+); that stretch reads GAAGMIS. Positions 177 and 183 each coordinate substrate. Residue Asn-190 coordinates NADP(+). Gln-197 lines the NAD(+) pocket. Residue 214–216 participates in NADP(+) binding; that stretch reads VGN. Substrate contacts are provided by Asn-216 and Arg-247. His-272 serves as the catalytic Proton acceptor. Cysteines 408 and 420 form a disulfide.

The protein belongs to the LDH/MDH superfamily. MDH type 2 family. In terms of assembly, homodimer.

The protein resides in the plastid. It localises to the chloroplast. The enzyme catalyses (S)-malate + NADP(+) = oxaloacetate + NADPH + H(+). Chloroplast NADP-MDH is activated upon illumination. In order to be enzymatically active, disulfide bridges on the protein must be reduced by thioredoxin which receives electrons from ferredoxin and the electron transport system of photosynthesis. In terms of biological role, the chloroplastic, NADP-dependent form is essential for the photosynthesis C4 cycle, which allows plants to circumvent the problem of photorespiration. In C4 plants, NADP-MDH activity acts to convert oxaloacetate to malate in chloroplasts of mesophyll cells for transport to the bundle sheath cells. The protein is Malate dehydrogenase [NADP], chloroplastic of Zea mays (Maize).